The following is a 759-amino-acid chain: Xaa-Pro dipeptidyl-peptidase (759 aa).

Catalysis depends on charge relay system residues Ser-347, Asp-467, and His-497.

This sequence belongs to the peptidase S15 family. As to quaternary structure, homodimer.

The protein localises to the cytoplasm. The enzyme catalyses Hydrolyzes Xaa-Pro-|- bonds to release unblocked, N-terminal dipeptides from substrates including Ala-Pro-|-p-nitroanilide and (sequentially) Tyr-Pro-|-Phe-Pro-|-Gly-Pro-|-Ile.. Removes N-terminal dipeptides sequentially from polypeptides having unsubstituted N-termini provided that the penultimate residue is proline. The chain is Xaa-Pro dipeptidyl-peptidase from Streptococcus gordonii (strain Challis / ATCC 35105 / BCRC 15272 / CH1 / DL1 / V288).